We begin with the raw amino-acid sequence, 229 residues long: Potassium/proton antiporter CemA (229 aa).

4 helical membrane passes run 7–27 (FTSL…SLSF), 114–134 (IICF…LVIL), 145–165 (LSDT…IGFH), and 189–209 (ILSS…KFWV).

Belongs to the CemA family.

Its subcellular location is the plastid. It is found in the chloroplast inner membrane. The enzyme catalyses K(+)(in) + H(+)(out) = K(+)(out) + H(+)(in). Its function is as follows. Contributes to K(+)/H(+) antiport activity by supporting proton efflux to control proton extrusion and homeostasis in chloroplasts in a light-dependent manner to modulate photosynthesis. Prevents excessive induction of non-photochemical quenching (NPQ) under continuous-light conditions. Indirectly promotes efficient inorganic carbon uptake into chloroplasts. This chain is Potassium/proton antiporter CemA, found in Daucus carota (Wild carrot).